The sequence spans 407 residues: Imidazolonepropionase (407 aa).

Fe(3+) is bound by residues histidine 68 and histidine 70. Zn(2+) is bound by residues histidine 68 and histidine 70. Residues arginine 77, tyrosine 140, and histidine 173 each contribute to the 4-imidazolone-5-propanoate site. Tyrosine 140 contacts N-formimidoyl-L-glutamate. Histidine 238 is a Fe(3+) binding site. A Zn(2+)-binding site is contributed by histidine 238. Glutamine 241 is a 4-imidazolone-5-propanoate binding site. Aspartate 313 provides a ligand contact to Fe(3+). A Zn(2+)-binding site is contributed by aspartate 313. Residues asparagine 315 and glycine 317 each contribute to the N-formimidoyl-L-glutamate site. Threonine 318 lines the 4-imidazolone-5-propanoate pocket.

Belongs to the metallo-dependent hydrolases superfamily. HutI family. Requires Zn(2+) as cofactor. Fe(3+) is required as a cofactor.

It localises to the cytoplasm. The enzyme catalyses 4-imidazolone-5-propanoate + H2O = N-formimidoyl-L-glutamate. Its pathway is amino-acid degradation; L-histidine degradation into L-glutamate; N-formimidoyl-L-glutamate from L-histidine: step 3/3. Catalyzes the hydrolytic cleavage of the carbon-nitrogen bond in imidazolone-5-propanoate to yield N-formimidoyl-L-glutamate. It is the third step in the universal histidine degradation pathway. The chain is Imidazolonepropionase from Burkholderia lata (strain ATCC 17760 / DSM 23089 / LMG 22485 / NCIMB 9086 / R18194 / 383).